The sequence spans 423 residues: Adenylosuccinate synthetase (423 aa).

Residues 12–18 and 40–42 each bind GTP; these read GDEGKGK and GHT. Asp-13 functions as the Proton acceptor in the catalytic mechanism. Mg(2+)-binding residues include Asp-13 and Gly-40. IMP contacts are provided by residues 13–16, 38–41, Thr-129, Arg-143, Gln-224, Thr-239, and Arg-303; these read DEGK and NAGH. The Proton donor role is filled by His-41. 299-305 serves as a coordination point for substrate; sequence ATTGRKR. GTP contacts are provided by residues Arg-305, 331–333, and 412–414; these read KGD and SVG.

The protein belongs to the adenylosuccinate synthetase family. In terms of assembly, homodimer. Mg(2+) serves as cofactor.

Its subcellular location is the cytoplasm. The enzyme catalyses IMP + L-aspartate + GTP = N(6)-(1,2-dicarboxyethyl)-AMP + GDP + phosphate + 2 H(+). It functions in the pathway purine metabolism; AMP biosynthesis via de novo pathway; AMP from IMP: step 1/2. Plays an important role in the de novo pathway of purine nucleotide biosynthesis. Catalyzes the first committed step in the biosynthesis of AMP from IMP. This chain is Adenylosuccinate synthetase, found in Christiangramia forsetii (strain DSM 17595 / CGMCC 1.15422 / KT0803) (Gramella forsetii).